Consider the following 55-residue polypeptide: Metallothionein-1 (55 aa).

The protein belongs to the metallothionein superfamily. Type 11 family.

In Yarrowia lipolytica (strain CLIB 122 / E 150) (Yeast), this protein is Metallothionein-1 (MTP1).